The chain runs to 1220 residues: DNA-directed RNA polymerase subunit beta (1220 aa).

It belongs to the RNA polymerase beta chain family. In terms of assembly, the RNAP catalytic core consists of 2 alpha, 1 beta, 1 beta' and 1 omega subunit. When a sigma factor is associated with the core the holoenzyme is formed, which can initiate transcription.

The catalysed reaction is RNA(n) + a ribonucleoside 5'-triphosphate = RNA(n+1) + diphosphate. In terms of biological role, DNA-dependent RNA polymerase catalyzes the transcription of DNA into RNA using the four ribonucleoside triphosphates as substrates. This is DNA-directed RNA polymerase subunit beta from Mesomycoplasma hyopneumoniae (strain 232) (Mycoplasma hyopneumoniae).